The chain runs to 91 residues: Small ribosomal subunit protein uS19 (91 aa).

Belongs to the universal ribosomal protein uS19 family.

Functionally, protein S19 forms a complex with S13 that binds strongly to the 16S ribosomal RNA. This is Small ribosomal subunit protein uS19 from Pseudomonas paraeruginosa (strain DSM 24068 / PA7) (Pseudomonas aeruginosa (strain PA7)).